Consider the following 217-residue polypeptide: Uridine kinase (217 aa).

17-24 contributes to the ATP binding site; that stretch reads GASASGKS.

It belongs to the uridine kinase family.

It is found in the cytoplasm. It catalyses the reaction uridine + ATP = UMP + ADP + H(+). The enzyme catalyses cytidine + ATP = CMP + ADP + H(+). It participates in pyrimidine metabolism; CTP biosynthesis via salvage pathway; CTP from cytidine: step 1/3. Its pathway is pyrimidine metabolism; UMP biosynthesis via salvage pathway; UMP from uridine: step 1/1. The chain is Uridine kinase from Haemophilus ducreyi (strain 35000HP / ATCC 700724).